We begin with the raw amino-acid sequence, 43 residues long: Photosystem II reaction center protein Psb30 (43 aa).

Residues 16–36 traverse the membrane as a helical segment; it reads IAQLTMLAMVLIAGPVVIVLL.

This sequence belongs to the Psb30/Ycf12 family. As to quaternary structure, PSII is composed of 1 copy each of membrane proteins PsbA, PsbB, PsbC, PsbD, PsbE, PsbF, PsbH, PsbI, PsbJ, PsbK, PsbL, PsbM, PsbT, PsbX, PsbY, PsbZ, Psb30/Ycf12, peripheral proteins PsbO, CyanoQ (PsbQ), PsbU, PsbV and a large number of cofactors. It forms dimeric complexes.

It is found in the cellular thylakoid membrane. A core subunit of photosystem II (PSII), probably helps stabilize the reaction center. This chain is Photosystem II reaction center protein Psb30, found in Trichodesmium erythraeum (strain IMS101).